We begin with the raw amino-acid sequence, 123 residues long: Neuropeptide-like peptides nlp-40 (123 aa).

The signal sequence occupies residues 1–17 (MKLVILLSFVATVAVFA). 3 propeptides span residues 30-31 (RA), 66-67 (KR), and 75-76 (KR).

Expressed in intestinal cells.

It localises to the secreted. It is found in the cytoplasmic vesicle. In terms of biological role, neuropeptide ligand for the G-protein coupled receptor aex-2. Activates and regulates the rhythmic calcium influx in DVB GABergic neurons during the defecation motor program, which is a coordinated series of three muscle contractions that occurs every 45 seconds. In Caenorhabditis elegans, this protein is Neuropeptide-like peptides nlp-40.